Reading from the N-terminus, the 614-residue chain is Dihydroxy-acid dehydratase (614 aa).

Aspartate 81 serves as a coordination point for Mg(2+). Residue cysteine 122 participates in [2Fe-2S] cluster binding. 2 residues coordinate Mg(2+): aspartate 123 and lysine 124. Lysine 124 carries the post-translational modification N6-carboxylysine. Cysteine 193 provides a ligand contact to [2Fe-2S] cluster. Position 489 (glutamate 489) interacts with Mg(2+). Residue serine 515 is the Proton acceptor of the active site.

Belongs to the IlvD/Edd family. In terms of assembly, homodimer. [2Fe-2S] cluster is required as a cofactor. It depends on Mg(2+) as a cofactor.

The enzyme catalyses (2R)-2,3-dihydroxy-3-methylbutanoate = 3-methyl-2-oxobutanoate + H2O. It catalyses the reaction (2R,3R)-2,3-dihydroxy-3-methylpentanoate = (S)-3-methyl-2-oxopentanoate + H2O. It functions in the pathway amino-acid biosynthesis; L-isoleucine biosynthesis; L-isoleucine from 2-oxobutanoate: step 3/4. The protein operates within amino-acid biosynthesis; L-valine biosynthesis; L-valine from pyruvate: step 3/4. Its function is as follows. Functions in the biosynthesis of branched-chain amino acids. Catalyzes the dehydration of (2R,3R)-2,3-dihydroxy-3-methylpentanoate (2,3-dihydroxy-3-methylvalerate) into 2-oxo-3-methylpentanoate (2-oxo-3-methylvalerate) and of (2R)-2,3-dihydroxy-3-methylbutanoate (2,3-dihydroxyisovalerate) into 2-oxo-3-methylbutanoate (2-oxoisovalerate), the penultimate precursor to L-isoleucine and L-valine, respectively. This is Dihydroxy-acid dehydratase from Hahella chejuensis (strain KCTC 2396).